We begin with the raw amino-acid sequence, 179 residues long: RNA polymerase sigma-E factor (179 aa).

The Polymerase core binding signature appears at 36–49; sequence DLLQTALVRTYGRW. The H-T-H motif DNA-binding region spans 130 to 149; the sequence is TEETAAALGMSAGTVKSTLH.

It belongs to the sigma-70 factor family. ECF subfamily.

Its subcellular location is the cytoplasm. Sigma factors are initiation factors that promote the attachment of RNA polymerase to specific initiation sites and are then released. This sigma factor is required for normal cell wall integrity; it is recruited by RNA polymerase to transcribe genes with cell wall-related functions. This chain is RNA polymerase sigma-E factor (sigE), found in Streptomyces avermitilis (strain ATCC 31267 / DSM 46492 / JCM 5070 / NBRC 14893 / NCIMB 12804 / NRRL 8165 / MA-4680).